We begin with the raw amino-acid sequence, 497 residues long: Probable malate:quinone oxidoreductase (497 aa).

This sequence belongs to the MQO family. It depends on FAD as a cofactor.

The enzyme catalyses (S)-malate + a quinone = a quinol + oxaloacetate. The protein operates within carbohydrate metabolism; tricarboxylic acid cycle; oxaloacetate from (S)-malate (quinone route): step 1/1. This is Probable malate:quinone oxidoreductase from Exiguobacterium sibiricum (strain DSM 17290 / CCUG 55495 / CIP 109462 / JCM 13490 / 255-15).